Consider the following 619-residue polypeptide: Dihydroxy-acid dehydratase (619 aa).

Asp-81 serves as a coordination point for Mg(2+). Cys-122 serves as a coordination point for [2Fe-2S] cluster. Residues Asp-123 and Lys-124 each coordinate Mg(2+). The residue at position 124 (Lys-124) is an N6-carboxylysine. Residue Cys-195 participates in [2Fe-2S] cluster binding. Mg(2+) is bound at residue Glu-494. Ser-520 serves as the catalytic Proton acceptor.

It belongs to the IlvD/Edd family. Homodimer. The cofactor is [2Fe-2S] cluster. It depends on Mg(2+) as a cofactor.

It carries out the reaction (2R)-2,3-dihydroxy-3-methylbutanoate = 3-methyl-2-oxobutanoate + H2O. The catalysed reaction is (2R,3R)-2,3-dihydroxy-3-methylpentanoate = (S)-3-methyl-2-oxopentanoate + H2O. It functions in the pathway amino-acid biosynthesis; L-isoleucine biosynthesis; L-isoleucine from 2-oxobutanoate: step 3/4. The protein operates within amino-acid biosynthesis; L-valine biosynthesis; L-valine from pyruvate: step 3/4. Functionally, functions in the biosynthesis of branched-chain amino acids. Catalyzes the dehydration of (2R,3R)-2,3-dihydroxy-3-methylpentanoate (2,3-dihydroxy-3-methylvalerate) into 2-oxo-3-methylpentanoate (2-oxo-3-methylvalerate) and of (2R)-2,3-dihydroxy-3-methylbutanoate (2,3-dihydroxyisovalerate) into 2-oxo-3-methylbutanoate (2-oxoisovalerate), the penultimate precursor to L-isoleucine and L-valine, respectively. The protein is Dihydroxy-acid dehydratase of Shewanella sp. (strain ANA-3).